We begin with the raw amino-acid sequence, 451 residues long: Gamma-aminobutyric acid receptor subunit alpha-2 (451 aa).

A signal peptide spans 1–28; the sequence is MKTKLSTCNVWSLLLVLLVWDPVRLVLA. At 29-249 the chain is on the extracellular side; the sequence is NIQEDEAKNN…MTAHFHLKRK (221 aa). N-linked (GlcNAc...) asparagine glycosylation occurs at Asn-38. Arg-94 is a binding site for 4-aminobutanoate. The N-linked (GlcNAc...) asparagine glycan is linked to Asn-138. 4-aminobutanoate is bound at residue Thr-157. Cys-166 and Cys-180 are joined by a disulfide. The helical transmembrane segment at 250–270 threads the bilayer; the sequence is IGYFVIQTYLPCIMTVILSQV. The Cytoplasmic portion of the chain corresponds to 271–280; sequence SFWLNRESVP. The helical transmembrane segment at 281–300 threads the bilayer; it reads ARTVFGVTTVLTMTTLSISA. The Extracellular portion of the chain corresponds to 301–311; sequence RNSLPKVAYAT. The chain crosses the membrane as a helical span at residues 312–332; the sequence is AMDWFIAVCYAFVFSALIEFA. The Cytoplasmic portion of the chain corresponds to 333–420; that stretch reads TVNYFTKRGW…FNSVSKIDRM (88 aa). The disordered stretch occupies residues 389–408; the sequence is KSATTPEPNKKPENKPAEAK. Positions 396–408 are enriched in basic and acidic residues; it reads PNKKPENKPAEAK. The chain crosses the membrane as a helical span at residues 421-441; that stretch reads SRIVFPVLFGTFNLVYWATYL. Topologically, residues 442–451 are extracellular; the sequence is NREPVLGVSP.

The protein belongs to the ligand-gated ion channel (TC 1.A.9) family. Gamma-aminobutyric acid receptor (TC 1.A.9.5) subfamily. GABRA2 sub-subfamily. Heteropentamer, formed by a combination of alpha (GABRA1-6), beta (GABRB1-3), gamma (GABRG1-3), delta (GABRD), epsilon (GABRE), rho (GABRR1-3), pi (GABRP) and theta (GABRQ) subunits, each subunit exhibiting distinct physiological and pharmacological properties. Interacts with UBQLN1. Interacts with KIF21B. Interacts with LHFPL4. Interacts with SHISA7; interaction leads to the regulation of GABA(A) receptor trafficking, channel deactivation kinetics and pharmacology. Glycosylated.

It is found in the postsynaptic cell membrane. Its subcellular location is the cell membrane. It localises to the cytoplasmic vesicle membrane. The protein localises to the cell projection. The protein resides in the dendrite. The enzyme catalyses chloride(in) = chloride(out). Its activity is regulated as follows. Activated by pentobarbital. Inhibited by the antagonist bicuculline. Its function is as follows. Alpha subunit of the heteropentameric ligand-gated chloride channel gated by gamma-aminobutyric acid (GABA), a major inhibitory neurotransmitter in the brain. GABA-gated chloride channels, also named GABA(A) receptors (GABAAR), consist of five subunits arranged around a central pore and contain GABA active binding site(s) located at the alpha and beta subunit interface(s). When activated by GABA, GABAARs selectively allow the flow of chloride anions across the cell membrane down their electrochemical gradient. Chloride influx into the postsynaptic neuron following GABAAR opening decreases the neuron ability to generate a new action potential, thereby reducing nerve transmission. The alpha-2 subunit exhibits synaptogenic activity together with beta-2 and very little to no activity together with beta-3, the gamma-2 subunit being necessary but not sufficient to induce rapid synaptic contacts formation. The polypeptide is Gamma-aminobutyric acid receptor subunit alpha-2 (Mus musculus (Mouse)).